The chain runs to 362 residues: Glutamate--cysteine ligase (362 aa).

The protein belongs to the glutamate--cysteine ligase type 2 family. YbdK subfamily.

The enzyme catalyses L-cysteine + L-glutamate + ATP = gamma-L-glutamyl-L-cysteine + ADP + phosphate + H(+). Functionally, catalyzes the synthesis of gamma-glutamylcysteine (gamma-GC), the main low-molecular-weight thiol compound instead of glutathione in halophilic archaea. The chain is Glutamate--cysteine ligase from Natronomonas pharaonis (strain ATCC 35678 / DSM 2160 / CIP 103997 / JCM 8858 / NBRC 14720 / NCIMB 2260 / Gabara) (Halobacterium pharaonis).